A 508-amino-acid chain; its full sequence is Photosystem II CP47 reaction center protein (508 aa).

6 helical membrane passes run 21–36 (SVHI…WAGS), 101–115 (IVFS…IWHW), 140–156 (GIHL…FGAF), 203–218 (IAAG…FHLS), 237–252 (VLSS…AFVV), and 457–472 (SFAL…HGAR).

Belongs to the PsbB/PsbC family. PsbB subfamily. PSII is composed of 1 copy each of membrane proteins PsbA, PsbB, PsbC, PsbD, PsbE, PsbF, PsbH, PsbI, PsbJ, PsbK, PsbL, PsbM, PsbT, PsbX, PsbY, PsbZ, Psb30/Ycf12, at least 3 peripheral proteins of the oxygen-evolving complex and a large number of cofactors. It forms dimeric complexes. The cofactor is Binds multiple chlorophylls. PSII binds additional chlorophylls, carotenoids and specific lipids..

The protein localises to the plastid. It is found in the chloroplast thylakoid membrane. Functionally, one of the components of the core complex of photosystem II (PSII). It binds chlorophyll and helps catalyze the primary light-induced photochemical processes of PSII. PSII is a light-driven water:plastoquinone oxidoreductase, using light energy to abstract electrons from H(2)O, generating O(2) and a proton gradient subsequently used for ATP formation. The protein is Photosystem II CP47 reaction center protein of Acorus calamus var. americanus (American sweet flag).